Reading from the N-terminus, the 79-residue chain is UPF0291 protein lp_2062 (79 aa).

The protein belongs to the UPF0291 family.

The protein localises to the cytoplasm. The protein is UPF0291 protein lp_2062 of Lactiplantibacillus plantarum (strain ATCC BAA-793 / NCIMB 8826 / WCFS1) (Lactobacillus plantarum).